Here is a 221-residue protein sequence, read N- to C-terminus: Protein GrpE (221 aa).

The segment at methionine 1–aspartate 83 is disordered. Over residues glutamine 23–glycine 32 the composition is skewed to basic and acidic residues. Positions glutamate 41 to glutamate 53 are enriched in low complexity.

Belongs to the GrpE family. In terms of assembly, homodimer.

It is found in the cytoplasm. Functionally, participates actively in the response to hyperosmotic and heat shock by preventing the aggregation of stress-denatured proteins, in association with DnaK and GrpE. It is the nucleotide exchange factor for DnaK and may function as a thermosensor. Unfolded proteins bind initially to DnaJ; upon interaction with the DnaJ-bound protein, DnaK hydrolyzes its bound ATP, resulting in the formation of a stable complex. GrpE releases ADP from DnaK; ATP binding to DnaK triggers the release of the substrate protein, thus completing the reaction cycle. Several rounds of ATP-dependent interactions between DnaJ, DnaK and GrpE are required for fully efficient folding. This is Protein GrpE from Geobacillus stearothermophilus (Bacillus stearothermophilus).